Here is a 237-residue protein sequence, read N- to C-terminus: Large ribosomal subunit protein uL3 (237 aa).

Disordered regions lie at residues 133–155 (ASHG…DPGK) and 213–237 (PENA…EGGE). Positions 135-150 (HGNSITHRSHGSTGQR) are enriched in polar residues. Q151 carries the post-translational modification N5-methylglutamine. Low complexity predominate over residues 220-237 (AGLRAGAKAEAAATEGGE).

Belongs to the universal ribosomal protein uL3 family. As to quaternary structure, part of the 50S ribosomal subunit. Forms a cluster with proteins L14 and L19. Post-translationally, methylated by PrmB.

Functionally, one of the primary rRNA binding proteins, it binds directly near the 3'-end of the 23S rRNA, where it nucleates assembly of the 50S subunit. In Brucella abortus (strain S19), this protein is Large ribosomal subunit protein uL3.